Reading from the N-terminus, the 385-residue chain is MTGALTPASTPALTLARDLIRAPSVTPDDGGAIGVLTAALRGLGFDVTDLPFGEGPARTPNLFARLGRSGPHLCFAGHTDVVPPGDGGWTSGPFEAALRDGCLYGRGACDMKGGIAAFVGAVARILESGRTLRGSVSLLITGDEEGPATFGTVKVLEWMAAHGQVPDFCVVGEPTNPDHLGDVIKIGRRGSLNARIVVPGIQGHVAYPHRADNPVHRLLAILSDLTARPLDQGTEWFEPSSLQVTTVDVGNEATNVIPGRATARLNIRFNDLHTGQGLADWIRGVAHVHAPGAEVTVQISGEAFRTEPTPELDMLAASIQAVTGRAPRLDTGGGTSDARFISRYCPVAEFGLVGASMHKVDEHVPVADLLALTDIYAAFLERLMG.

Position 78 (His78) interacts with Zn(2+). The active site involves Asp80. Position 110 (Asp110) interacts with Zn(2+). Glu144 functions as the Proton acceptor in the catalytic mechanism. The Zn(2+) site is built by Glu145, Glu173, and His358.

It belongs to the peptidase M20A family. DapE subfamily. Homodimer. Requires Zn(2+) as cofactor. It depends on Co(2+) as a cofactor.

It catalyses the reaction N-succinyl-(2S,6S)-2,6-diaminopimelate + H2O = (2S,6S)-2,6-diaminopimelate + succinate. Its pathway is amino-acid biosynthesis; L-lysine biosynthesis via DAP pathway; LL-2,6-diaminopimelate from (S)-tetrahydrodipicolinate (succinylase route): step 3/3. In terms of biological role, catalyzes the hydrolysis of N-succinyl-L,L-diaminopimelic acid (SDAP), forming succinate and LL-2,6-diaminopimelate (DAP), an intermediate involved in the bacterial biosynthesis of lysine and meso-diaminopimelic acid, an essential component of bacterial cell walls. The sequence is that of Succinyl-diaminopimelate desuccinylase from Gluconacetobacter diazotrophicus (strain ATCC 49037 / DSM 5601 / CCUG 37298 / CIP 103539 / LMG 7603 / PAl5).